Here is a 179-residue protein sequence, read N- to C-terminus: Large ribosomal subunit protein bL17 (179 aa).

The tract at residues 123–179 is disordered; sequence RTRGTDTLPDTVTDTGPDSAPDPVPGSEPGSAAGDLPDADTAPADPGESSSNQRVIR. Positions 154–168 are enriched in low complexity; that stretch reads AAGDLPDADTAPADP. The span at 170 to 179 shows a compositional bias: polar residues; sequence ESSSNQRVIR.

The protein belongs to the bacterial ribosomal protein bL17 family. In terms of assembly, part of the 50S ribosomal subunit. Contacts protein L32.

The chain is Large ribosomal subunit protein bL17 from Tropheryma whipplei (strain Twist) (Whipple's bacillus).